The primary structure comprises 178 residues: Actin-related protein 2/3 complex subunit 3-A (178 aa).

The protein belongs to the ARPC3 family. As to quaternary structure, component of the Arp2/3 complex composed of actr2/arp2, actr3/arp3, arpc1 (arpc1a or arpc1b), arpc2, arpc3, arpc4 and arpc5.

The protein localises to the cytoplasm. It localises to the cytoskeleton. The protein resides in the cell projection. Its subcellular location is the nucleus. In terms of biological role, component of the Arp2/3 complex, a multiprotein complex that mediates actin polymerization upon stimulation by nucleation-promoting factor (NPF). The Arp2/3 complex mediates the formation of branched actin networks in the cytoplasm, providing the force for cell motility. In addition to its role in the cytoplasmic cytoskeleton, the Arp2/3 complex also promotes actin polymerization in the nucleus, thereby regulating gene transcription and repair of damaged DNA. The Arp2/3 complex promotes homologous recombination (HR) repair in response to DNA damage by promoting nuclear actin polymerization, leading to drive motility of double-strand breaks (DSBs). This is Actin-related protein 2/3 complex subunit 3-A (arpc3-a) from Xenopus laevis (African clawed frog).